A 364-amino-acid chain; its full sequence is tRNA 2-selenouridine synthase (364 aa).

Positions 14-137 (LLADTPLIDV…LRQTAIQATW (124 aa)) constitute a Rhodanese domain. The active-site S-selanylcysteine intermediate is the Cys-97.

This sequence belongs to the SelU family. In terms of assembly, monomer.

It catalyses the reaction 5-methylaminomethyl-2-thiouridine(34) in tRNA + selenophosphate + (2E)-geranyl diphosphate + H2O + H(+) = 5-methylaminomethyl-2-selenouridine(34) in tRNA + (2E)-thiogeraniol + phosphate + diphosphate. The enzyme catalyses 5-methylaminomethyl-2-thiouridine(34) in tRNA + (2E)-geranyl diphosphate = 5-methylaminomethyl-S-(2E)-geranyl-thiouridine(34) in tRNA + diphosphate. The catalysed reaction is 5-methylaminomethyl-S-(2E)-geranyl-thiouridine(34) in tRNA + selenophosphate + H(+) = 5-methylaminomethyl-2-(Se-phospho)selenouridine(34) in tRNA + (2E)-thiogeraniol. It carries out the reaction 5-methylaminomethyl-2-(Se-phospho)selenouridine(34) in tRNA + H2O = 5-methylaminomethyl-2-selenouridine(34) in tRNA + phosphate. In terms of biological role, involved in the post-transcriptional modification of the uridine at the wobble position (U34) of tRNA(Lys), tRNA(Glu) and tRNA(Gln). Catalyzes the conversion of 2-thiouridine (S2U-RNA) to 2-selenouridine (Se2U-RNA). Acts in a two-step process involving geranylation of 2-thiouridine (S2U) to S-geranyl-2-thiouridine (geS2U) and subsequent selenation of the latter derivative to 2-selenouridine (Se2U) in the tRNA chain. This chain is tRNA 2-selenouridine synthase, found in Salmonella gallinarum (strain 287/91 / NCTC 13346).